Reading from the N-terminus, the 376-residue chain is Glutamate 5-kinase (376 aa).

Lysine 23 serves as a coordination point for ATP. Serine 63, aspartate 150, and asparagine 162 together coordinate substrate. ATP contacts are provided by residues 182–183 (SD) and 222–228 (TGGMASK). The PUA domain maps to 284–358 (GGALRIDAGA…GKQTAQLPEG (75 aa)).

The protein belongs to the glutamate 5-kinase family.

It localises to the cytoplasm. It carries out the reaction L-glutamate + ATP = L-glutamyl 5-phosphate + ADP. Its pathway is amino-acid biosynthesis; L-proline biosynthesis; L-glutamate 5-semialdehyde from L-glutamate: step 1/2. Its function is as follows. Catalyzes the transfer of a phosphate group to glutamate to form L-glutamate 5-phosphate. In Corynebacterium diphtheriae (strain ATCC 700971 / NCTC 13129 / Biotype gravis), this protein is Glutamate 5-kinase.